A 79-amino-acid chain; its full sequence is Sulfur carrier protein TusA (79 aa).

Cysteine 16 (cysteine persulfide intermediate) is an active-site residue.

This sequence belongs to the sulfur carrier protein TusA family.

The protein resides in the cytoplasm. Sulfur carrier protein which probably makes part of a sulfur-relay system. This is Sulfur carrier protein TusA from Pseudomonas aeruginosa (strain LESB58).